Reading from the N-terminus, the 135-residue chain is Large ribosomal subunit protein eL32 (135 aa).

Belongs to the eukaryotic ribosomal protein eL32 family.

The polypeptide is Large ribosomal subunit protein eL32 (Methanococcus maripaludis (strain C5 / ATCC BAA-1333)).